The primary structure comprises 157 residues: Pyruvoyl-dependent arginine decarboxylase (157 aa).

Ser44 carries the pyruvic acid (Ser) modification.

It belongs to the PdaD family. Pyruvate serves as cofactor.

The enzyme catalyses L-arginine + H(+) = agmatine + CO2. The protein is Pyruvoyl-dependent arginine decarboxylase of Thermococcus kodakarensis (strain ATCC BAA-918 / JCM 12380 / KOD1) (Pyrococcus kodakaraensis (strain KOD1)).